The primary structure comprises 263 residues: Indolethylamine N-methyltransferase (263 aa).

N6-succinyllysine is present on Lys13. Residues Tyr20, Tyr25, Gly63, Tyr69, 85–87 (DFT), and Asn90 contribute to the S-adenosyl-L-methionine site. N6-succinyllysine is present on Lys96. S-adenosyl-L-methionine is bound by residues 142 to 143 (DV) and Leu163.

It belongs to the class I-like SAM-binding methyltransferase superfamily. NNMT/PNMT/TEMT family. As to quaternary structure, monomer. Widely expressed. The highest levels were in thyroid, adrenal gland, adult and fetal lung. Intermediate levels in heart, placenta, skeletal muscle, testis, small intestine, pancreas, stomach, spinal cord, lymph node and trachea. Very low levels in adult and fetal kidney and liver, in adult spleen, thymus, ovary, colon and bone marrow. Not expressed in peripheral blood leukocytes and brain.

It localises to the cytoplasm. It catalyses the reaction a tertiary amine + S-adenosyl-L-methionine = a methylated tertiary amine + S-adenosyl-L-homocysteine + H(+). The catalysed reaction is a secondary amine + S-adenosyl-L-methionine = a methylated secondary amine + S-adenosyl-L-homocysteine + H(+). The enzyme catalyses a primary amine + S-adenosyl-L-methionine = a methylated primary amine + S-adenosyl-L-homocysteine + H(+). It carries out the reaction dimethyl sulfide + S-adenosyl-L-methionine = trimethylsulfonium + S-adenosyl-L-homocysteine. In terms of biological role, functions as a thioether S-methyltransferase and is active with a variety of thioethers and the corresponding selenium and tellurium compounds, including 3-methylthiopropionaldehyde, dimethyl selenide, dimethyl telluride, 2-methylthioethylamine, 2-methylthioethanol, methyl-n-propyl sulfide and diethyl sulfide. Plays an important role in the detoxification of selenium compounds. Catalyzes the N-methylation of tryptamine and structurally related compounds. The sequence is that of Indolethylamine N-methyltransferase (INMT) from Homo sapiens (Human).